The following is a 394-amino-acid chain: Elongation factor Tu (394 aa).

Positions 10 to 204 constitute a tr-type G domain; that stretch reads KPHVNVGTIG…ALDTYIPEPE (195 aa). A G1 region spans residues 19–26; that stretch reads GHVDHGKT. 19–26 is a GTP binding site; it reads GHVDHGKT. Threonine 26 is a binding site for Mg(2+). The interval 60 to 64 is G2; it reads GITIN. A G3 region spans residues 81 to 84; that stretch reads DCPG. Residues 81–85 and 136–139 contribute to the GTP site; these read DCPGH and NKCD. The G4 stretch occupies residues 136–139; it reads NKCD. A G5 region spans residues 174–176; the sequence is SAL.

Belongs to the TRAFAC class translation factor GTPase superfamily. Classic translation factor GTPase family. EF-Tu/EF-1A subfamily. Monomer.

It localises to the cytoplasm. The catalysed reaction is GTP + H2O = GDP + phosphate + H(+). GTP hydrolase that promotes the GTP-dependent binding of aminoacyl-tRNA to the A-site of ribosomes during protein biosynthesis. This is Elongation factor Tu from Vibrio cholerae serotype O1 (strain ATCC 39541 / Classical Ogawa 395 / O395).